The following is a 515-amino-acid chain: MVLIAACILSKTGKLLVARQFVNDMMRSRLEGLVDAFPKLIGNEKEAATRQHTFVETDSVRYVYHPLDNIYLVLVTTKNSNILEDLETLRLFVRVIPEYCRSNEEKEILAHDFDLIFAFDEVVTLGYRESVNLAQIRTFTEMDSHEERVFMQIKEAQEKAAKQAMAEKAKELKRAQKEALSRGLKPSYQSSTGISSSSTPNAAAVSEPAAPRPSAPKGPIGGGKALKLGGKTNNEDDFLDTLRQQGQSIAPVQKASLSGGVSSLAAPISTAPRVKREVVHVRTEEKINTRVSRDGGLESGEVQATVTLSIGSPEFIPISIKMNNGSAAGTQLQVHPNLDKKEWQSSSTLKIKPNGKPYPVNSDVGILKWKMALSEEEQLPISFNCWPQESSDGVQVNIEYTLQREDITLNNVRIIVPLPTATAPSVGECDGEYEYHKTKNVIVWSLAVIDSSNSSGTLEFSVPNGHCDHFFPVSVGFTSENLFVPITVQKVVKNDGSPVTYSVETTFNSENFEIV.

Residues 161–180 (AKQAMAEKAKELKRAQKEAL) are compositionally biased toward basic and acidic residues. A disordered region spans residues 161 to 231 (AKQAMAEKAK…GGKALKLGGK (71 aa)). The segment covering 187–198 (SYQSSTGISSSS) has biased composition (low complexity). Residues 276–515 (REVVHVRTEE…TFNSENFEIV (240 aa)) enclose the MHD domain.

Belongs to the adaptor complexes medium subunit family. Delta-COP subfamily. In terms of assembly, oligomeric complex that consists of at least the alpha, beta, beta', gamma, delta, epsilon and zeta subunits.

It localises to the cytoplasm. Its subcellular location is the golgi apparatus membrane. It is found in the cytoplasmic vesicle. The protein resides in the COPI-coated vesicle membrane. The coatomer is a cytosolic protein complex that binds to dilysine motifs and reversibly associates with Golgi non-clathrin-coated vesicles, which further mediate biosynthetic protein transport from the ER, via the Golgi up to the trans Golgi network. Coatomer complex is required for budding from Golgi membranes, and is essential for the retrograde Golgi-to-ER transport of dilysine-tagged proteins. The chain is Probable coatomer subunit delta from Caenorhabditis elegans.